The primary structure comprises 361 residues: DNA polymerase subunit gamma-2, mitochondrial (361 aa).

Residues 1–18 constitute a mitochondrion transit peptide; it reads MSRIQRCFKSLASAGFFR.

Component of the DNA polymerase gamma complex consisting of two subunits: the catalytic subunit DNApol-gamma/DNApolG1 and the accessory subunit PolG2/DNApol-gamma35. As to expression, expressed in ovaries (at protein level).

Its subcellular location is the mitochondrion. As accessory component of the DNA polymerase gamma complex is involved in the replication of mitochondrial DNA. Does not bind DNA. Essential for mitochondrial DNA maintenance and larval development. The polypeptide is DNA polymerase subunit gamma-2, mitochondrial (Drosophila melanogaster (Fruit fly)).